A 274-amino-acid chain; its full sequence is Large ribosomal subunit protein uL2cz/uL2cy (274 aa).

Disordered stretches follow at residues 1-22 and 225-274; these read MAIHLYKTSTPSTRNGAVDSQV and PVDH…RRSK.

The protein belongs to the universal ribosomal protein uL2 family. In terms of assembly, part of the 50S ribosomal subunit.

It localises to the plastid. Its subcellular location is the chloroplast. This chain is Large ribosomal subunit protein uL2cz/uL2cy (rpl2-A), found in Arabis hirsuta (Hairy rock-cress).